The following is a 259-amino-acid chain: Thiamine thiazole synthase (259 aa).

NAD(+) is bound by residues Ala33, 52–53, Gly60, Val124, and 152–154; these read ER and HVD. Fe cation-binding residues include Asp154 and His169. An NAD(+)-binding site is contributed by Met219. Residue Arg229 coordinates glycine.

The protein belongs to the THI4 family. In terms of assembly, homooctamer; tetramer of dimers. It depends on Fe(2+) as a cofactor.

It catalyses the reaction hydrogen sulfide + glycine + NAD(+) = ADP-5-ethyl-4-methylthiazole-2-carboxylate + nicotinamide + 3 H2O + H(+). The protein operates within cofactor biosynthesis; thiamine diphosphate biosynthesis. Involved in the biosynthesis of the thiazole moiety of thiamine. Catalyzes the conversion of NAD and glycine to adenosine diphosphate 5-(2-hydroxyethyl)-4-methylthiazole-2-carboxylate (ADT), an adenylated thiazole intermediate, using free sulfide as a source of sulfur. The chain is Thiamine thiazole synthase from Pyrobaculum neutrophilum (strain DSM 2338 / JCM 9278 / NBRC 100436 / V24Sta) (Thermoproteus neutrophilus).